The primary structure comprises 1374 residues: DNA-directed RNA polymerase subunit beta' (1374 aa).

The interval 1–47 (MTSTSPKSRKPSTKTTKSKSKSKSKSKAAKAAAASASPALARTPPQF) is disordered. A compositionally biased stretch (basic residues) spans 7–28 (KSRKPSTKTTKSKSKSKSKSKA). Over residues 29–45 (AKAAAASASPALARTPP) the composition is skewed to low complexity. Positions 258, 325, 332, and 335 each coordinate Zn(2+). A disordered region spans residues 1343–1374 (VRPTGENELEEEQLPDPSALEGLQQEGLLTEE). Residues 1362–1374 (LEGLQQEGLLTEE) are compositionally biased toward low complexity.

This sequence belongs to the RNA polymerase beta' chain family. RpoC2 subfamily. In terms of assembly, in cyanobacteria the RNAP catalytic core is composed of 2 alpha, 1 beta, 1 beta', 1 gamma and 1 omega subunit. When a sigma factor is associated with the core the holoenzyme is formed, which can initiate transcription. Zn(2+) is required as a cofactor.

The enzyme catalyses RNA(n) + a ribonucleoside 5'-triphosphate = RNA(n+1) + diphosphate. Functionally, DNA-dependent RNA polymerase catalyzes the transcription of DNA into RNA using the four ribonucleoside triphosphates as substrates. The protein is DNA-directed RNA polymerase subunit beta' of Prochlorococcus marinus (strain MIT 9303).